Reading from the N-terminus, the 349-residue chain is Ribosomal RNA large subunit methyltransferase M (349 aa).

S-adenosyl-L-methionine-binding positions include 216-219 (APGG), aspartate 235, aspartate 255, and aspartate 271. Lysine 300 acts as the Proton acceptor in catalysis.

Belongs to the class I-like SAM-binding methyltransferase superfamily. RNA methyltransferase RlmE family. RlmM subfamily. Monomer.

The protein localises to the cytoplasm. It carries out the reaction cytidine(2498) in 23S rRNA + S-adenosyl-L-methionine = 2'-O-methylcytidine(2498) in 23S rRNA + S-adenosyl-L-homocysteine + H(+). Its function is as follows. Catalyzes the 2'-O-methylation at nucleotide C2498 in 23S rRNA. This chain is Ribosomal RNA large subunit methyltransferase M, found in Saccharophagus degradans (strain 2-40 / ATCC 43961 / DSM 17024).